The following is a 312-amino-acid chain: Ribosomal protein L11 methyltransferase (312 aa).

S-adenosyl-L-methionine contacts are provided by T160, G181, D203, and N246.

Belongs to the methyltransferase superfamily. PrmA family.

It localises to the cytoplasm. It carries out the reaction L-lysyl-[protein] + 3 S-adenosyl-L-methionine = N(6),N(6),N(6)-trimethyl-L-lysyl-[protein] + 3 S-adenosyl-L-homocysteine + 3 H(+). Its function is as follows. Methylates ribosomal protein L11. This chain is Ribosomal protein L11 methyltransferase, found in Staphylococcus aureus (strain MRSA252).